We begin with the raw amino-acid sequence, 718 residues long: Phenylalanine--tRNA ligase beta subunit (718 aa).

The tRNA-binding domain maps to 39 to 153 (LNEISGIKFG…IFDLESNPLK (115 aa)). Positions 386–460 (SKKTFLDLNY…RFYGLEKLKD (75 aa)) constitute a B5 domain. The Mg(2+) site is built by aspartate 438, aspartate 444, and aspartate 448.

This sequence belongs to the phenylalanyl-tRNA synthetase beta subunit family. Type 1 subfamily. Tetramer of two alpha and two beta subunits. Mg(2+) serves as cofactor.

It is found in the cytoplasm. The catalysed reaction is tRNA(Phe) + L-phenylalanine + ATP = L-phenylalanyl-tRNA(Phe) + AMP + diphosphate + H(+). This chain is Phenylalanine--tRNA ligase beta subunit, found in Mesomycoplasma hyopneumoniae (strain J / ATCC 25934 / NCTC 10110) (Mycoplasma hyopneumoniae).